The sequence spans 351 residues: MRKIIHVDMDCFFAAVEMRDNPALRDIPIAIGGSRERRGVISTANYPARQFGVRSAMPTAMALKLCPHLTLLPGRFVAYKEASRHVRDIFSRYTSLIEPLSLDEAWLDVTDSPHCYGSATLIAREIRQTIFNELQLTASAGVAPVKFLAKIASDLNKPNGQYVITPADVPGFLKTLPLAKIPGVGKVSAAKLENMGLRTCGDIQQCDLAMLLKRFGKFGRVLWERSQGIDERDVNSERLRKSVGVERTLAEDIHEWSDCEAIIEHLYPELERRLAIVKPDLLIARQGVKLKFNDFQQTTQEHVWPQLNKEDLIITARKTWNERRGERGVRLVGLHVTLLDPQLERQLVLGL.

The 182-residue stretch at 4-185 (IIHVDMDCFF…LPLAKIPGVG (182 aa)) folds into the UmuC domain. Residues aspartate 8 and aspartate 103 each contribute to the Mg(2+) site. Residue glutamate 104 is part of the active site.

Belongs to the DNA polymerase type-Y family. As to quaternary structure, monomer. Requires Mg(2+) as cofactor.

The protein localises to the cytoplasm. It carries out the reaction DNA(n) + a 2'-deoxyribonucleoside 5'-triphosphate = DNA(n+1) + diphosphate. Its function is as follows. Poorly processive, error-prone DNA polymerase involved in untargeted mutagenesis. Copies undamaged DNA at stalled replication forks, which arise in vivo from mismatched or misaligned primer ends. These misaligned primers can be extended by PolIV. Exhibits no 3'-5' exonuclease (proofreading) activity. May be involved in translesional synthesis, in conjunction with the beta clamp from PolIII. In Salmonella choleraesuis (strain SC-B67), this protein is DNA polymerase IV.